A 76-amino-acid polypeptide reads, in one-letter code: Acyl carrier protein (76 aa).

Residues 1-76 enclose the Carrier domain; the sequence is MSIEERVKKI…SAIDYVQNNQ (76 aa). S36 carries the O-(pantetheine 4'-phosphoryl)serine modification.

Belongs to the acyl carrier protein (ACP) family. 4'-phosphopantetheine is transferred from CoA to a specific serine of apo-ACP by AcpS. This modification is essential for activity because fatty acids are bound in thioester linkage to the sulfhydryl of the prosthetic group.

The protein resides in the cytoplasm. It participates in lipid metabolism; fatty acid biosynthesis. Carrier of the growing fatty acid chain in fatty acid biosynthesis. The polypeptide is Acyl carrier protein (Pasteurella multocida (strain Pm70)).